A 499-amino-acid chain; its full sequence is Lysine--tRNA ligase (499 aa).

Glu-408 and Glu-415 together coordinate Mg(2+).

Belongs to the class-II aminoacyl-tRNA synthetase family. Homodimer. Requires Mg(2+) as cofactor.

It is found in the cytoplasm. It carries out the reaction tRNA(Lys) + L-lysine + ATP = L-lysyl-tRNA(Lys) + AMP + diphosphate. This is Lysine--tRNA ligase from Agrobacterium fabrum (strain C58 / ATCC 33970) (Agrobacterium tumefaciens (strain C58)).